Consider the following 253-residue polypeptide: MSYLRRCLPLAQQITLLNQPAAPVYSICRQRLFSTSSRSFTKTYLFTLDRPILQSTTSTLSGQHKIHTSAHHFKKRKIQEETQKHELDLLRYDIKALKDAPKPALYLGLAGLIPFVSAPLLMNVTGCYYPEVAFAQVAYGASILSFLGGVRWGFAIPENSPAKPDWMNLTNSTVPALLAWLALLFRDNITEAAVLVIMGLGIALHYDLALLPTYPSWFKALRAILTVVAVFSLVGSLINSSVYPHKSLVSQEP.

The next 5 helical transmembrane spans lie at 104 to 124 (ALYL…LMNV), 137 to 157 (VAYG…FAIP), 165 to 185 (DWMN…ALLF), 192 to 212 (AAVL…ALLP), and 223 to 243 (AILT…SSVY).

It is found in the membrane. The protein is Transmembrane protein 69 (tmem69) of Xenopus tropicalis (Western clawed frog).